We begin with the raw amino-acid sequence, 270 residues long: NAD(P)H-hydrate epimerase (270 aa).

The YjeF N-terminal domain maps to 25–234 (FQQLMDLMQN…DLLAPEAIYQ (210 aa)). 73–77 (DNGGQ) is a (6S)-NADPHX binding site. K(+)-binding residues include Asn-74 and Asp-144. (6S)-NADPHX contacts are provided by residues 148 to 154 (GVGLYGH) and Glu-177. Residue Thr-180 coordinates K(+).

Belongs to the NnrE/AIBP family. It depends on K(+) as a cofactor.

The enzyme catalyses (6R)-NADHX = (6S)-NADHX. It carries out the reaction (6R)-NADPHX = (6S)-NADPHX. In terms of biological role, catalyzes the epimerization of the S- and R-forms of NAD(P)HX, a damaged form of NAD(P)H that is a result of enzymatic or heat-dependent hydration. This is a prerequisite for the S-specific NAD(P)H-hydrate dehydratase to allow the repair of both epimers of NAD(P)HX. This chain is NAD(P)H-hydrate epimerase, found in Legionella pneumophila (strain Corby).